The following is a 758-amino-acid chain: 3-isopropylmalate dehydratase (758 aa).

[4Fe-4S] cluster is bound by residues Cys-359, Cys-420, and Cys-423. Phosphoserine is present on residues Ser-486 and Ser-488.

This sequence belongs to the aconitase/IPM isomerase family. [4Fe-4S] cluster serves as cofactor.

The enzyme catalyses (2R,3S)-3-isopropylmalate = (2S)-2-isopropylmalate. It participates in amino-acid biosynthesis; L-leucine biosynthesis; L-leucine from 3-methyl-2-oxobutanoate: step 2/4. Catalyzes the isomerization between 2-isopropylmalate and 3-isopropylmalate, via the formation of 2-isopropylmaleate. The protein is 3-isopropylmalate dehydratase (leu2) of Schizosaccharomyces pombe (strain 972 / ATCC 24843) (Fission yeast).